The chain runs to 1593 residues: THO complex subunit 2 (1593 aa).

Positions 1-163 are anchor domain; interaction with THOC5 and THOC7; it reads MAAAAVVVPA…KLFYKQQKFN (163 aa). Residues 164–534 are bow domain; interaction with THOC1 dock domain and THOC3; the sequence is LLREENEGYA…GQWKNETYNS (371 aa). The interval 322-341 is disordered; it reads KMDEREKEKEKEEEKVEKPP. Positions 535-686 are MIF4G domain; interaction with THOC3 and DDX39B; the sequence is HPLLVKVKAQ…LILKEVVQKM (152 aa). The stern domain stretch occupies residues 687–1174; it reads AGIEITEEMT…LAMGYSGQLK (488 aa). Positions 896–965 form a coiled coil; that stretch reads HTSYEREVNK…LKLEKDNWLL (70 aa). Residues 923-928 carry the Nuclear localization signal motif; that stretch reads KKKKEK. The interval 1175-1593 is charged domain; that stretch reads SRKSYMIPEN…KHHKSSDKHR (419 aa). Residues 1184–1593 form a disordered region; that stretch reads NEFHHKDPPP…KHHKSSDKHR (410 aa). Residues 1218 to 1234 are compositionally biased toward basic and acidic residues; that stretch reads KSDESSTEETDKSRERS. The residue at position 1222 (Ser1222) is a Phosphoserine. Low complexity predominate over residues 1251 to 1263; it reads GNSSNGNSGSNSN. Composition is skewed to basic and acidic residues over residues 1265–1285, 1294–1343, and 1353–1383; these read AVKE…KEKT, VLGK…EKFK, and STQE…KGGE. Residue Thr1385 is modified to Phosphothreonine. A phosphoserine mark is found at Ser1390, Ser1393, and Ser1417. The span at 1416-1425 shows a compositional bias: polar residues; the sequence is PSPSHSSTVK. Residue Thr1443 is modified to Phosphothreonine. The span at 1449–1504 shows a compositional bias: basic and acidic residues; the sequence is KSKEREMDKKDLDKSRERSREREKKDEKDRKERKRDHSNNDREVPPDLTKRRKEEN. Phosphoserine is present on residues Ser1450, Ser1486, and Ser1516. Over residues 1524–1582 the composition is skewed to basic and acidic residues; that stretch reads NEKDKEKNKSKSSGKEKGSDSFKSEKMDKISSGGKKESRHDKEKIEKKEKRDSSGGKEE. Residues 1583-1593 are compositionally biased toward basic residues; that stretch reads KKHHKSSDKHR.

This sequence belongs to the THOC2 family. Component of the THO subcomplex, which is composed of THOC1, THOC2, THOC3, THOC5, THOC6 and THOC7. The THO subcomplex interacts with DDX39B to form the THO-DDX39B complex which multimerizes into a 28-subunit tetrameric assembly. Component of the transcription/export (TREX) complex at least composed of ALYREF/THOC4, DDX39B, SARNP/CIP29, CHTOP and the THO subcomplex; in the complex interacts with THOC1, THOC3, THOC5, THOC7 and DDX39B. TREX seems to have a dynamic structure involving ATP-dependent remodeling. Interacts with POLDIP3 and ZC3H11A. Expressed in the hippocampus and the cerebral cortex.

The protein localises to the nucleus. The protein resides in the nucleus speckle. It localises to the cytoplasm. Its function is as follows. Component of the THO subcomplex of the TREX complex which is thought to couple mRNA transcription, processing and nuclear export, and which specifically associates with spliced mRNA and not with unspliced pre-mRNA. Required for efficient export of polyadenylated RNA and spliced mRNA. The THOC1-THOC2-THOC3 core complex alone is sufficient to bind export factor NXF1-NXT1 and promote ATPase activity of DDX39B; in the complex THOC2 is the only component that directly interacts with DDX39B. TREX is recruited to spliced mRNAs by a transcription-independent mechanism, binds to mRNA upstream of the exon-junction complex (EJC) and is recruited in a splicing- and cap-dependent manner to a region near the 5' end of the mRNA where it functions in mRNA export to the cytoplasm via the TAP/NXF1 pathway. Required for NXF1 localization to the nuclear rim. THOC2 (and probably the THO complex) is involved in releasing mRNA from nuclear speckle domains. In terms of biological role, (Microbial infection) The TREX complex is essential for the export of Kaposi's sarcoma-associated herpesvirus (KSHV) intronless mRNAs and infectious virus production. In Homo sapiens (Human), this protein is THO complex subunit 2 (THOC2).